The chain runs to 282 residues: Glutamyl endopeptidase (282 aa).

The first 27 residues, 1–27 (MKKRFLSICTMTIAALATTTMVNTSYA), serve as a signal peptide directing secretion. A propeptide spanning residues 28 to 66 (KTDTESHNHSSLGTENKNVLDINSSSHNIKPSQNKSYPS) is cleaved from the precursor. Residues histidine 117, aspartate 159, and serine 235 each act as charge relay system in the active site.

Belongs to the peptidase S1B family.

It localises to the secreted. The enzyme catalyses Preferential cleavage: Glu-|-Xaa, Asp-|-Xaa.. Exhibits a significant hydrolytic activity for the carbonyl side of glutamic acid. Shows activity toward human fibronectin and type 1 collagen. This is Glutamyl endopeptidase (gseA) from Staphylococcus epidermidis (strain ATCC 35984 / DSM 28319 / BCRC 17069 / CCUG 31568 / BM 3577 / RP62A).